The primary structure comprises 181 residues: ATP synthase subunit delta (181 aa).

It belongs to the ATPase delta chain family. F-type ATPases have 2 components, F(1) - the catalytic core - and F(0) - the membrane proton channel. F(1) has five subunits: alpha(3), beta(3), gamma(1), delta(1), epsilon(1). F(0) has three main subunits: a(1), b(2) and c(10-14). The alpha and beta chains form an alternating ring which encloses part of the gamma chain. F(1) is attached to F(0) by a central stalk formed by the gamma and epsilon chains, while a peripheral stalk is formed by the delta and b chains.

The protein localises to the cell membrane. In terms of biological role, f(1)F(0) ATP synthase produces ATP from ADP in the presence of a proton or sodium gradient. F-type ATPases consist of two structural domains, F(1) containing the extramembraneous catalytic core and F(0) containing the membrane proton channel, linked together by a central stalk and a peripheral stalk. During catalysis, ATP synthesis in the catalytic domain of F(1) is coupled via a rotary mechanism of the central stalk subunits to proton translocation. Its function is as follows. This protein is part of the stalk that links CF(0) to CF(1). It either transmits conformational changes from CF(0) to CF(1) or is implicated in proton conduction. This chain is ATP synthase subunit delta, found in Shouchella clausii (strain KSM-K16) (Alkalihalobacillus clausii).